We begin with the raw amino-acid sequence, 558 residues long: Dihydroxy-acid dehydratase (558 aa).

Cys-54 is a binding site for [2Fe-2S] cluster. Asp-86 lines the Mg(2+) pocket. Cys-127 is a [2Fe-2S] cluster binding site. Residues Asp-128 and Lys-129 each coordinate Mg(2+). N6-carboxylysine is present on Lys-129. A [2Fe-2S] cluster-binding site is contributed by Cys-199. Residue Glu-448 coordinates Mg(2+). The Proton acceptor role is filled by Ser-474.

This sequence belongs to the IlvD/Edd family. Homodimer. The cofactor is [2Fe-2S] cluster. Mg(2+) is required as a cofactor.

The enzyme catalyses (2R)-2,3-dihydroxy-3-methylbutanoate = 3-methyl-2-oxobutanoate + H2O. It carries out the reaction (2R,3R)-2,3-dihydroxy-3-methylpentanoate = (S)-3-methyl-2-oxopentanoate + H2O. The protein operates within amino-acid biosynthesis; L-isoleucine biosynthesis; L-isoleucine from 2-oxobutanoate: step 3/4. It functions in the pathway amino-acid biosynthesis; L-valine biosynthesis; L-valine from pyruvate: step 3/4. Its function is as follows. Functions in the biosynthesis of branched-chain amino acids. Catalyzes the dehydration of (2R,3R)-2,3-dihydroxy-3-methylpentanoate (2,3-dihydroxy-3-methylvalerate) into 2-oxo-3-methylpentanoate (2-oxo-3-methylvalerate) and of (2R)-2,3-dihydroxy-3-methylbutanoate (2,3-dihydroxyisovalerate) into 2-oxo-3-methylbutanoate (2-oxoisovalerate), the penultimate precursor to L-isoleucine and L-valine, respectively. The sequence is that of Dihydroxy-acid dehydratase from Acidothermus cellulolyticus (strain ATCC 43068 / DSM 8971 / 11B).